The chain runs to 186 residues: MTIAEIKNTVEGKMDQSIEAFKHNLTKIRTGRANPALLDTVHVDYYGAMLPISQVANVSLLDARTISVQPWEKGMGAKIEKAIRDSDLGLNPSSMGDLIRVPMPAMSEERRKELSKVVRGEGEGAKIAIRNLRRDANEAIRKAVKDKLASEDEQKRCETDIQKVTDRHVIVIDQLVAAKEQDIMAV.

This sequence belongs to the RRF family.

The protein localises to the cytoplasm. Its function is as follows. Responsible for the release of ribosomes from messenger RNA at the termination of protein biosynthesis. May increase the efficiency of translation by recycling ribosomes from one round of translation to another. This Albidiferax ferrireducens (strain ATCC BAA-621 / DSM 15236 / T118) (Rhodoferax ferrireducens) protein is Ribosome-recycling factor.